A 245-amino-acid chain; its full sequence is DNA polymerase sliding clamp (245 aa).

It belongs to the PCNA family. Homotrimer. The subunits circularize to form a toroid; DNA passes through its center. Replication factor C (RFC) is required to load the toroid on the DNA.

Functionally, sliding clamp subunit that acts as a moving platform for DNA processing. Responsible for tethering the catalytic subunit of DNA polymerase and other proteins to DNA during high-speed replication. The sequence is that of DNA polymerase sliding clamp from Archaeoglobus fulgidus (strain ATCC 49558 / DSM 4304 / JCM 9628 / NBRC 100126 / VC-16).